Reading from the N-terminus, the 101-residue chain is MSNTQAERSIIGMIDMFHKYTRRDDKIEKPSLLTMMKENFPNFLSACDKKGTNYLADVFEKKDKNEDKKIDFSEFLSLLGDIATDYHKQSHGAAPCSGGSQ.

N-acetylserine is present on S2. EF-hand domains are found at residues M13–D48 and K50–D85. H18 and D25 together coordinate Zn(2+). C47 and C96 form a disulfide bridge. Residues D63, N65, D67, K69, and E74 each coordinate Ca(2+). Positions 87 and 91 each coordinate Zn(2+).

Interacts with RANBP9. As to expression, fetal ear, skin, and tongue and human cell lines. Highly up-regulated in psoriatic epidermis. Also highly expressed in the urine of bladder squamous cell carcinoma (SCC) bearing patients.

It is found in the cytoplasm. It localises to the secreted. The sequence is that of Protein S100-A7 (S100A7) from Homo sapiens (Human).